The sequence spans 333 residues: Cytochrome f (333 aa).

Residues 1–44 form the signal peptide; that stretch reads MRNACTRARLTRTARAMVKTLFIAIASVTFFFTSDLALPQSAAA. Heme-binding residues include Y45, C66, C69, and H70. Residues 299 to 318 form a helical membrane-spanning segment; sequence VGWLIAFVALVMLAQVMLVL.

This sequence belongs to the cytochrome f family. The 4 large subunits of the cytochrome b6-f complex are cytochrome b6, subunit IV (17 kDa polypeptide, PetD), cytochrome f and the Rieske protein, while the 4 small subunits are PetG, PetL, PetM and PetN. The complex functions as a dimer. The cofactor is heme.

It localises to the cellular thylakoid membrane. Component of the cytochrome b6-f complex, which mediates electron transfer between photosystem II (PSII) and photosystem I (PSI), cyclic electron flow around PSI, and state transitions. This Nostoc sp. (strain PCC 7120 / SAG 25.82 / UTEX 2576) protein is Cytochrome f.